The chain runs to 476 residues: Adenosylhomocysteinase (476 aa).

Substrate-binding residues include Thr-67, Asp-142, and Glu-202. NAD(+) is bound at residue 203 to 205; that stretch reads TTT. 2 residues coordinate substrate: Lys-232 and Asp-236. NAD(+)-binding positions include Asn-237, 266-271, Glu-289, Asn-324, 345-347, and Asn-390; these read GYGDVG and IGH.

It belongs to the adenosylhomocysteinase family. Requires NAD(+) as cofactor.

Its subcellular location is the cytoplasm. The enzyme catalyses S-adenosyl-L-homocysteine + H2O = L-homocysteine + adenosine. It functions in the pathway amino-acid biosynthesis; L-homocysteine biosynthesis; L-homocysteine from S-adenosyl-L-homocysteine: step 1/1. Functionally, may play a key role in the regulation of the intracellular concentration of adenosylhomocysteine. The sequence is that of Adenosylhomocysteinase from Synechococcus sp. (strain CC9311).